Here is a 422-residue protein sequence, read N- to C-terminus: Mitochondrial distribution and morphology protein 12 (422 aa).

The SMP-LTD domain occupies 1–386 (MSFDINWNQL…WPSWICIDMN (386 aa)). Disordered regions lie at residues 74-134 (GATN…HDLG) and 387-422 (DDGD…THEV). 2 stretches are compositionally biased toward acidic residues: residues 109–130 (FDDD…EYDD) and 387–401 (DDGD…EDSN). Basic and acidic residues predominate over residues 405–422 (GDGKDNDGKHGDGPTHEV).

This sequence belongs to the MDM12 family. As to quaternary structure, component of the ER-mitochondria encounter structure (ERMES) or MDM complex, composed of MMM1, MDM10, MDM12 and MDM34. An MMM1 homodimer associates with one molecule of MDM12 on each side in a pairwise head-to-tail manner, and the SMP-LTD domains of MMM1 and MDM12 generate a continuous hydrophobic tunnel for phospholipid trafficking.

Its subcellular location is the mitochondrion outer membrane. It is found in the endoplasmic reticulum membrane. In terms of biological role, component of the ERMES/MDM complex, which serves as a molecular tether to connect the endoplasmic reticulum (ER) and mitochondria. Components of this complex are involved in the control of mitochondrial shape and protein biogenesis, and function in nonvesicular lipid trafficking between the ER and mitochondria. MDM12 is required for the interaction of the ER-resident membrane protein MMM1 and the outer mitochondrial membrane-resident beta-barrel protein MDM10. The MDM12-MMM1 subcomplex functions in the major beta-barrel assembly pathway that is responsible for biogenesis of all mitochondrial outer membrane beta-barrel proteins, and acts in a late step after the SAM complex. The MDM10-MDM12-MMM1 subcomplex further acts in the TOM40-specific pathway after the action of the MDM12-MMM1 complex. Essential for establishing and maintaining the structure of mitochondria and maintenance of mtDNA nucleoids. The sequence is that of Mitochondrial distribution and morphology protein 12 from Candida dubliniensis (strain CD36 / ATCC MYA-646 / CBS 7987 / NCPF 3949 / NRRL Y-17841) (Yeast).